Consider the following 44-residue polypeptide: Large ribosomal subunit protein P2 (44 aa).

N-acetylmethionine is present on Met-1. A phosphoserine mark is found at Ser-17 and Ser-19. Lys-21 is modified (N6-acetyllysine; alternate). The residue at position 21 (Lys-21) is an N6-succinyllysine; alternate.

This sequence belongs to the eukaryotic ribosomal protein P1/P2 family. As to quaternary structure, heterodimer with RPLP1 at the lateral ribosomal stalk of the large ribosomal subunit. Post-translationally, phosphorylated.

Plays an important role in the elongation step of protein synthesis. The polypeptide is Large ribosomal subunit protein P2 (RPLP2) (Oryctolagus cuniculus (Rabbit)).